Reading from the N-terminus, the 305-residue chain is tRNA pseudouridine synthase B (305 aa).

Residue aspartate 48 is the Nucleophile of the active site.

This sequence belongs to the pseudouridine synthase TruB family. Type 1 subfamily.

The catalysed reaction is uridine(55) in tRNA = pseudouridine(55) in tRNA. In terms of biological role, responsible for synthesis of pseudouridine from uracil-55 in the psi GC loop of transfer RNAs. The sequence is that of tRNA pseudouridine synthase B from Pseudomonas putida (strain GB-1).